Consider the following 469-residue polypeptide: ATP synthase subunit beta (469 aa).

156 to 163 (GGAGVGKT) provides a ligand contact to ATP.

The protein belongs to the ATPase alpha/beta chains family. As to quaternary structure, F-type ATPases have 2 components, CF(1) - the catalytic core - and CF(0) - the membrane proton channel. CF(1) has five subunits: alpha(3), beta(3), gamma(1), delta(1), epsilon(1). CF(0) has three main subunits: a(1), b(2) and c(9-12). The alpha and beta chains form an alternating ring which encloses part of the gamma chain. CF(1) is attached to CF(0) by a central stalk formed by the gamma and epsilon chains, while a peripheral stalk is formed by the delta and b chains.

Its subcellular location is the cell membrane. The enzyme catalyses ATP + H2O + 4 H(+)(in) = ADP + phosphate + 5 H(+)(out). Produces ATP from ADP in the presence of a proton gradient across the membrane. The catalytic sites are hosted primarily by the beta subunits. The protein is ATP synthase subunit beta of Bacillus cereus (strain AH820).